The following is a 54-amino-acid chain: Ovomucoid (54 aa).

The Kazal-like domain maps to 4–54 (VDCSEYPKPVCSLEYMPLCGSDSQTYSNECNFCNAVVDSNGTLTLSHFGKC). 3 cysteine pairs are disulfide-bonded: cysteine 6–cysteine 36, cysteine 14–cysteine 33, and cysteine 22–cysteine 54. Asparagine 43 carries an N-linked (GlcNAc...) asparagine glycan.

The protein resides in the secreted. The sequence is that of Ovomucoid from Caracara plancus (Southern caracara).